The sequence spans 72 residues: Gas vesicle protein A (72 aa).

This sequence belongs to the gas vesicle GvpA family. In terms of assembly, the gas vesicle shell is 2 nm thick and consists of a single layer of this protein. It forms helical ribs nearly perpendicular to the long axis of the vesicle.

The protein resides in the gas vesicle shell. Gas vesicles are hollow, gas filled proteinaceous nanostructures found in some microorganisms. During planktonic growth they allow positioning of the organism at a favorable depth for light or nutrient acquisition. GvpA forms the protein shell. The polypeptide is Gas vesicle protein A (Pseudanabaena galeata (strain PCC 6901)).